A 267-amino-acid polypeptide reads, in one-letter code: MKVGIDAGGTLIKIVQEQDNQRTFKTELTKNIDQVVEWLNQQQIEKLCLTGGNAGVIAENINIPAQIFVEFDAASQGLGILLKEQGHDLADYIFANVGTGTSLHYFDGQSQRRVGGIGTGGGMIQGLGYLLSQITDYKQLTDMAQHGDRNTIDLKVRHIYKDTEPPIPGDLTAANFGHVLHHLDADFTPSNKLAAVIGVVGEVVTTMAITVAREFKTENIVYIGSSFHNNALLRKVVEDYTVLRGCKPYYVENGAFSGAIGALYLEK.

Residue 6–13 (DAGGTLIK) participates in ATP binding. The active-site Proton acceptor is the E70. Residues T99, 121 to 125 (GGMIQ), Y137, and S225 each bind ATP.

It belongs to the type II pantothenate kinase family. In terms of assembly, homodimer.

The protein localises to the cytoplasm. The catalysed reaction is (R)-pantothenate + ATP = (R)-4'-phosphopantothenate + ADP + H(+). The protein operates within cofactor biosynthesis; coenzyme A biosynthesis; CoA from (R)-pantothenate: step 1/5. Catalyzes the phosphorylation of pantothenate (Pan), the first step in CoA biosynthesis. The chain is Type II pantothenate kinase from Staphylococcus aureus (strain USA300).